Consider the following 1416-residue polypeptide: Phospholipid-transporting ATPase VD (1416 aa).

The Cytoplasmic portion of the chain corresponds to Met-1–Arg-97. The helical transmembrane segment at Ala-98–Phe-118 threads the bilayer. Over Gln-119–Lys-120 the chain is Exoplasmic loop. The chain crosses the membrane as a helical span at residues Glu-121 to Glu-141. Over Asp-142–Asp-321 the chain is Cytoplasmic. Residues Val-322 to Ile-342 form a helical membrane-spanning segment. At Trp-343–Pro-365 the chain is on the exoplasmic loop side. Residues Val-366–Ile-386 traverse the membrane as a helical segment. The Cytoplasmic segment spans residues Ser-387–Met-1110. Asp-438 functions as the 4-aspartylphosphate intermediate in the catalytic mechanism. 3 residues coordinate ATP: Asp-438, Lys-439, and Thr-440. Asp-438 is a Mg(2+) binding site. Thr-440 lines the Mg(2+) pocket. Positions Ala-498 to Met-544 are disordered. Residues Ala-514 to Val-523 are compositionally biased toward polar residues. ATP-binding residues include Glu-729, Phe-771, Lys-795, Arg-838, Thr-918, Gly-919, and Asp-920. A disordered region spans residues Pro-971–Gly-990. Positions Ser-976 to Gln-987 are enriched in polar residues. ATP is bound by residues Gly-993–Thr-1000, Arg-1027, and Lys-1033. Asp-1053 provides a ligand contact to Mg(2+). Residues Asn-1056 and Asp-1057 each coordinate ATP. Asp-1057 contributes to the Mg(2+) binding site. Residues Ile-1111 to Phe-1131 form a helical membrane-spanning segment. The Exoplasmic loop segment spans residues Cys-1132–Tyr-1142. Residues Trp-1143–Leu-1163 traverse the membrane as a helical segment. Residues Glu-1164 to Thr-1192 lie on the Cytoplasmic side of the membrane. A helical membrane pass occupies residues Phe-1193–Phe-1213. At Thr-1214–Asp-1221 the chain is on the exoplasmic loop side. Residues Ile-1222 to Val-1242 form a helical membrane-spanning segment. The Cytoplasmic segment spans residues Ile-1243–His-1252. Residues Met-1253–Leu-1273 traverse the membrane as a helical segment. Residues Cys-1274–Lys-1289 are Exoplasmic loop-facing. The chain crosses the membrane as a helical span at residues His-1290 to Pro-1310. At Arg-1311–Ser-1416 the chain is on the cytoplasmic side. Residues Ser-1358–Ser-1416 form a disordered region. Ala-1361 to Ser-1368 is a binding site for ATP. A compositionally biased stretch (basic and acidic residues) spans Ser-1392–Cys-1402.

This sequence belongs to the cation transport ATPase (P-type) (TC 3.A.3) family. Type IV subfamily. As to quaternary structure, component of a P4-ATPase flippase complex which consists of a catalytic alpha subunit ATP10A and an accessory beta subunit TMEM30A. Mg(2+) is required as a cofactor. Autophosphorylated at the conserved aspartate of the P-type ATPase signature sequence. Expressed at low amounts in liver, brain, testes, and kidney (at protein level). Expressed in placenta.

The protein localises to the cell membrane. It is found in the endoplasmic reticulum membrane. The enzyme catalyses ATP + H2O + phospholipidSide 1 = ADP + phosphate + phospholipidSide 2.. It catalyses the reaction a beta-D-glucosyl-(1&lt;-&gt;1')-N-acylsphing-4-enine(out) + ATP + H2O = a beta-D-glucosyl-(1&lt;-&gt;1')-N-acylsphing-4-enine(in) + ADP + phosphate + H(+). Catalytic component of a P4-ATPase flippase complex, which catalyzes the hydrolysis of ATP coupled to the transport of glucosylceramide (GlcCer) from the outer to the inner leaflet of the plasma membrane. In Mus musculus (Mouse), this protein is Phospholipid-transporting ATPase VD (Atp10d).